The primary structure comprises 294 residues: S-methyl-5'-thioadenosine phosphorylase (294 aa).

Phosphate is bound by residues S16, 58-59 (RH), and 91-92 (SA). M189 contacts substrate. T190 serves as a coordination point for phosphate. 213 to 215 (DFD) contributes to the substrate binding site.

It belongs to the PNP/MTAP phosphorylase family. MTAP subfamily. In terms of assembly, homohexamer. Dimer of a homotrimer.

It carries out the reaction S-methyl-5'-thioadenosine + phosphate = 5-(methylsulfanyl)-alpha-D-ribose 1-phosphate + adenine. The enzyme catalyses 5'-deoxyadenosine + phosphate = 5-deoxy-alpha-D-ribose 1-phosphate + adenine. The protein operates within amino-acid biosynthesis; L-methionine biosynthesis via salvage pathway; S-methyl-5-thio-alpha-D-ribose 1-phosphate from S-methyl-5'-thioadenosine (phosphorylase route): step 1/1. Catalyzes the reversible phosphorylation of S-methyl-5'-thioadenosine (MTA) to adenine and 5-methylthioribose-1-phosphate. Involved in the breakdown of MTA, a major by-product of polyamine biosynthesis. Responsible for the first step in the methionine salvage pathway after MTA has been generated from S-adenosylmethionine. Has broad substrate specificity with 6-aminopurine nucleosides as preferred substrates. Also catalyzes the phosphorylation of 5'-deoxyadenosine (5'dAdo) to 5-deoxyribose 1-phosphate. Part of a bifunctional DHAP-shunt salvage pathway for SAM by-products. This chain is S-methyl-5'-thioadenosine phosphorylase, found in Rhodospirillum rubrum (strain ATCC 11170 / ATH 1.1.1 / DSM 467 / LMG 4362 / NCIMB 8255 / S1).